The sequence spans 401 residues: Beta-ketoadipyl-CoA thiolase (401 aa).

Catalysis depends on C90, which acts as the Acyl-thioester intermediate. Catalysis depends on proton acceptor residues H357 and C387.

Belongs to the thiolase-like superfamily. Thiolase family.

The catalysed reaction is succinyl-CoA + acetyl-CoA = 3-oxoadipyl-CoA + CoA. It participates in aromatic compound metabolism; beta-ketoadipate pathway; acetyl-CoA and succinyl-CoA from 3-oxoadipate: step 2/2. Functionally, catalyzes thiolytic cleavage of beta-ketoadipyl-CoA to succinyl-CoA and acetyl-CoA. This chain is Beta-ketoadipyl-CoA thiolase (catF), found in Acinetobacter baylyi (strain ATCC 33305 / BD413 / ADP1).